Consider the following 413-residue polypeptide: 1-deoxy-D-xylulose 5-phosphate reductoisomerase (413 aa).

8 residues coordinate NADPH: Thr28, Gly29, Ser30, Ile31, Gly54, Arg55, Asn56, and Asn142. Position 143 (Lys143) interacts with 1-deoxy-D-xylulose 5-phosphate. Position 144 (Glu144) interacts with NADPH. Mn(2+) is bound at residue Asp168. 4 residues coordinate 1-deoxy-D-xylulose 5-phosphate: Ser169, Glu170, Ser194, and His217. Residue Glu170 participates in Mn(2+) binding. Gly223 provides a ligand contact to NADPH. Residues Ser230, Asn235, Lys236, and Glu239 each coordinate 1-deoxy-D-xylulose 5-phosphate. Residue Glu239 coordinates Mn(2+).

Belongs to the DXR family. The cofactor is Mg(2+). It depends on Mn(2+) as a cofactor.

It catalyses the reaction 2-C-methyl-D-erythritol 4-phosphate + NADP(+) = 1-deoxy-D-xylulose 5-phosphate + NADPH + H(+). The protein operates within isoprenoid biosynthesis; isopentenyl diphosphate biosynthesis via DXP pathway; isopentenyl diphosphate from 1-deoxy-D-xylulose 5-phosphate: step 1/6. Functionally, catalyzes the NADPH-dependent rearrangement and reduction of 1-deoxy-D-xylulose-5-phosphate (DXP) to 2-C-methyl-D-erythritol 4-phosphate (MEP). The chain is 1-deoxy-D-xylulose 5-phosphate reductoisomerase from Thermosynechococcus vestitus (strain NIES-2133 / IAM M-273 / BP-1).